A 306-amino-acid chain; its full sequence is Glutamyl-Q tRNA(Asp) synthetase (306 aa).

Residues 29–33 and Asp65 contribute to the L-glutamate site; that span reads RFAPS. Residues 32–42 carry the 'HIGH' region motif; it reads PSPTGPLHLGN. Residues Cys121, Cys123, Tyr141, and Cys145 each coordinate Zn(2+). The L-glutamate site is built by Tyr188 and Arg206. The 'KMSKS' region motif lies at 244 to 248; it reads KLAKR. Lys247 provides a ligand contact to ATP.

This sequence belongs to the class-I aminoacyl-tRNA synthetase family. GluQ subfamily. It depends on Zn(2+) as a cofactor.

Catalyzes the tRNA-independent activation of glutamate in presence of ATP and the subsequent transfer of glutamate onto a tRNA(Asp). Glutamate is transferred on the 2-amino-5-(4,5-dihydroxy-2-cyclopenten-1-yl) moiety of the queuosine in the wobble position of the QUC anticodon. This chain is Glutamyl-Q tRNA(Asp) synthetase, found in Prochlorococcus marinus (strain MIT 9303).